A 31-amino-acid chain; its full sequence is Cliotide T17 (31 aa).

Residues 1–31 constitute a cross-link (cyclopeptide (Gly-Asn)); sequence GTVPCGESCVFIPCITGIAGCSCKNKVCYLN. 3 cysteine pairs are disulfide-bonded: C5-C21, C9-C23, and C14-C28.

In terms of processing, contains 3 disulfide bonds. This is a cyclic peptide. As to expression, expressed in root nodules but not in seed.

In terms of biological role, probably participates in a plant defense mechanism. The sequence is that of Cliotide T17 from Clitoria ternatea (Butterfly pea).